The sequence spans 256 residues: Small ribosomal subunit protein bS18m (256 aa).

The interval 19–106 (GQRTAQFSTT…GGQRYGSNSQ (88 aa)) is disordered. Residues 21–30 (RTAQFSTTSP) show a composition bias toward polar residues. Residues 44 to 66 (NAPRTNTNTSSPSSNNNNNAGSS) are compositionally biased toward low complexity.

This sequence belongs to the bacterial ribosomal protein bS18 family. In terms of assembly, component of the mitochondrial small ribosomal subunit (mt-SSU). Mature N.crassa 74S mitochondrial ribosomes consist of a small (37S) and a large (54S) subunit. The 37S small subunit contains a 16S ribosomal RNA (16S mt-rRNA) and 32 different proteins. The 54S large subunit contains a 23S rRNA (23S mt-rRNA) and 42 different proteins.

The protein resides in the mitochondrion. Its function is as follows. Component of the mitochondrial ribosome (mitoribosome), a dedicated translation machinery responsible for the synthesis of mitochondrial genome-encoded proteins, including at least some of the essential transmembrane subunits of the mitochondrial respiratory chain. The mitoribosomes are attached to the mitochondrial inner membrane and translation products are cotranslationally integrated into the membrane. This Neurospora crassa (strain ATCC 24698 / 74-OR23-1A / CBS 708.71 / DSM 1257 / FGSC 987) protein is Small ribosomal subunit protein bS18m (rsm18).